Here is a 358-residue protein sequence, read N- to C-terminus: Alanine racemase (358 aa).

The Proton acceptor; specific for D-alanine role is filled by K35. At K35 the chain carries N6-(pyridoxal phosphate)lysine. Residue R130 coordinates substrate. Y255 acts as the Proton acceptor; specific for L-alanine in catalysis. M303 is a binding site for substrate.

Belongs to the alanine racemase family. The cofactor is pyridoxal 5'-phosphate.

The catalysed reaction is L-alanine = D-alanine. Its pathway is amino-acid biosynthesis; D-alanine biosynthesis; D-alanine from L-alanine: step 1/1. Functionally, catalyzes the interconversion of L-alanine and D-alanine. May also act on other amino acids. The protein is Alanine racemase (alr) of Shewanella oneidensis (strain ATCC 700550 / JCM 31522 / CIP 106686 / LMG 19005 / NCIMB 14063 / MR-1).